A 277-amino-acid chain; its full sequence is Phosphate import ATP-binding protein PstB 2 (277 aa).

In terms of domain architecture, ABC transporter spans 31-272 (IEVPGLNLFY…PAKKQTEDYI (242 aa)). 63–70 (GPSGCGKS) lines the ATP pocket.

This sequence belongs to the ABC transporter superfamily. Phosphate importer (TC 3.A.1.7) family. As to quaternary structure, the complex is composed of two ATP-binding proteins (PstB), two transmembrane proteins (PstC and PstA) and a solute-binding protein (PstS).

The protein resides in the cell inner membrane. The enzyme catalyses phosphate(out) + ATP + H2O = ADP + 2 phosphate(in) + H(+). Part of the ABC transporter complex PstSACB involved in phosphate import. Responsible for energy coupling to the transport system. The polypeptide is Phosphate import ATP-binding protein PstB 2 (Pseudomonas savastanoi pv. phaseolicola (strain 1448A / Race 6) (Pseudomonas syringae pv. phaseolicola (strain 1448A / Race 6))).